The sequence spans 228 residues: Thymidylate kinase (228 aa).

Position 20–27 (20–27 (GGEGSGKS)) interacts with ATP.

The protein belongs to the thymidylate kinase family.

The catalysed reaction is dTMP + ATP = dTDP + ADP. Its function is as follows. Phosphorylation of dTMP to form dTDP in both de novo and salvage pathways of dTTP synthesis. The polypeptide is Thymidylate kinase (Afipia carboxidovorans (strain ATCC 49405 / DSM 1227 / KCTC 32145 / OM5) (Oligotropha carboxidovorans)).